The primary structure comprises 217 residues: Transmembrane protein 247 (217 aa).

Residues 1–10 (MATEDREMME) are compositionally biased toward basic and acidic residues. The tract at residues 1 to 87 (MATEDREMME…GPATTKGQAG (87 aa)) is disordered. Residues 109–154 (RERDAEMELEKVRMEFELKRLKYLHEENERQRQHEEVMEQLQQQAT) adopt a coiled-coil conformation. 2 helical membrane-spanning segments follow: residues 165-185 (LLLPQNQFAMFLYCFIFIHII) and 192-212 (IFFLFSKHYLFCIAAILLCLI).

It localises to the membrane. The sequence is that of Transmembrane protein 247 from Bos taurus (Bovine).